We begin with the raw amino-acid sequence, 792 residues long: MKYNQYAYVETSPEKATEELLAINFLPENYSSLSFSELLAVLTGNVLAEATTRQAKDAKLAEFAVDDQTDLAAFLLDTPTAITASQFANVALQLLGYHPNYDYSLTDPLTCGKKHALPAFKDLTSKEELIFTFYRLLNTRSKNGQILLDVMAGKGYFTQFWGEGKFMFFNGKSLPVFDTSQVIREVVYVQSDLDTDGDGKGDLLPVTVFRPVESQDQLKVPALYTASPYFGGIIDNVKTNHNVDENLTDATTWTNPKYVAKPLVKSPAPSDQDVPATELATGQSSYGLNEYLLARGFASVFSGAIGNRHGDGIRITGSPEETISQKEVIEWLTGDRVAYTDRTRRFETKASWCSGNVGMTGRSYLGTLQIAIATTGVKGLKTVVSEAAISSWYDYYREHGLVVAPSECQGEDMDKLAEVCQSNLWDGGNFTAKKAYEAEQAELLAAQDRATGQYSDFWESRNYRHHTDGIKCSWISVHGLNDWNVKPKNVYKIWQKVKQLPVKSHLFLHQGPHYNMNNLVSIDFTDLMNLWFVHELLEVENGAYEQWPKVMIQDNLEADEWHAESDWASDLGQASLYLPTADGDLSTVENGTGQLTFTDLGGTEFKKAGISETDWEYQFISGEEKWAKASLRFESEEFLHPTTLVGRPKVRVRVAANKTVGQLSVALVDLGTRQRLTATPKIFARGNQPFGYRFGADSLQEFVPDKATKAKLITKAHMNLQNYQDMKQPSKLEAGQFVDLEFELQPTYYTLPAGAKLGLIIYSTDQGMTKRPLETEDYTVDLAGTALLLYRK.

Active-site charge relay system residues include Ser363, Asp482, and His513.

The protein belongs to the peptidase S15 family. Homodimer.

It localises to the cytoplasm. The catalysed reaction is Hydrolyzes Xaa-Pro-|- bonds to release unblocked, N-terminal dipeptides from substrates including Ala-Pro-|-p-nitroanilide and (sequentially) Tyr-Pro-|-Phe-Pro-|-Gly-Pro-|-Ile.. Its function is as follows. Removes N-terminal dipeptides sequentially from polypeptides having unsubstituted N-termini provided that the penultimate residue is proline. The polypeptide is Xaa-Pro dipeptidyl-peptidase (pepX) (Lactobacillus delbrueckii subsp. lactis).